A 450-amino-acid polypeptide reads, in one-letter code: Membrane-bound lytic murein transglycosylase F 2 (450 aa).

Positions 1–20 are cleaved as a signal peptide; it reads MRTWIAILAVVLVLLLNACT. A non-LT domain region spans residues 21–261; sequence DGPEDGPRLE…AMENRYYTYV (241 aa). Positions 262–450 are LT domain; the sequence is GEFDFVDLRA…YRDVIRQAFE (189 aa). The active site involves Glu308.

This sequence in the N-terminal section; belongs to the bacterial solute-binding protein 3 family. In the C-terminal section; belongs to the transglycosylase Slt family.

The protein resides in the cell outer membrane. The catalysed reaction is Exolytic cleavage of the (1-&gt;4)-beta-glycosidic linkage between N-acetylmuramic acid (MurNAc) and N-acetylglucosamine (GlcNAc) residues in peptidoglycan, from either the reducing or the non-reducing ends of the peptidoglycan chains, with concomitant formation of a 1,6-anhydrobond in the MurNAc residue.. Functionally, murein-degrading enzyme that degrades murein glycan strands and insoluble, high-molecular weight murein sacculi, with the concomitant formation of a 1,6-anhydromuramoyl product. Lytic transglycosylases (LTs) play an integral role in the metabolism of the peptidoglycan (PG) sacculus. Their lytic action creates space within the PG sacculus to allow for its expansion as well as for the insertion of various structures such as secretion systems and flagella. This Alkalilimnicola ehrlichii (strain ATCC BAA-1101 / DSM 17681 / MLHE-1) protein is Membrane-bound lytic murein transglycosylase F 2.